A 161-amino-acid polypeptide reads, in one-letter code: DNA-directed RNA polymerase 18 kDa subunit (161 aa).

Belongs to the poxviridae DNA-directed RNA polymerase 18 kDa subunit family. In terms of assembly, the DNA-dependent RNA polymerase used for intermediate and late genes expression consists of eight subunits 147 kDa, 133 kDa, 35 kDa, 30 kDa, 22 kDa, 19 kDa, 18 kDa and 7 kDa totalling more than 500 kDa in mass. The same holoenzyme, with the addition of the transcription-specificity factor RAP94, is used for early gene expression.

Its subcellular location is the virion. The catalysed reaction is RNA(n) + a ribonucleoside 5'-triphosphate = RNA(n+1) + diphosphate. Functionally, part of the DNA-dependent RNA polymerase which catalyzes the transcription of viral DNA into RNA using the four ribonucleoside triphosphates as substrates. Responsible for the transcription of early, intermediate and late genes. DNA-dependent RNA polymerase associates with the early transcription factor (ETF) thereby allowing the early genes transcription. Late transcription, and probably also intermediate transcription, require newly synthesized RNA polymerase. This Vertebrata (FPV) protein is DNA-directed RNA polymerase 18 kDa subunit (RPO18).